Reading from the N-terminus, the 157-residue chain is SsrA-binding protein (157 aa).

A disordered region spans residues 133–157 (HDKRNSIKEREGKREVERALKSRSR).

Belongs to the SmpB family.

The protein localises to the cytoplasm. Functionally, required for rescue of stalled ribosomes mediated by trans-translation. Binds to transfer-messenger RNA (tmRNA), required for stable association of tmRNA with ribosomes. tmRNA and SmpB together mimic tRNA shape, replacing the anticodon stem-loop with SmpB. tmRNA is encoded by the ssrA gene; the 2 termini fold to resemble tRNA(Ala) and it encodes a 'tag peptide', a short internal open reading frame. During trans-translation Ala-aminoacylated tmRNA acts like a tRNA, entering the A-site of stalled ribosomes, displacing the stalled mRNA. The ribosome then switches to translate the ORF on the tmRNA; the nascent peptide is terminated with the 'tag peptide' encoded by the tmRNA and targeted for degradation. The ribosome is freed to recommence translation, which seems to be the essential function of trans-translation. In Verminephrobacter eiseniae (strain EF01-2), this protein is SsrA-binding protein.